A 492-amino-acid polypeptide reads, in one-letter code: Adenosylhomocysteinase (492 aa).

Positions 68, 153, and 215 each coordinate substrate. 216–218 provides a ligand contact to NAD(+); sequence TTT. Substrate is bound by residues Lys-245 and Asp-249. NAD(+) is bound by residues Asn-250, 279-284, Glu-302, Asn-337, 358-360, and Asn-406; these read GYGDVG and IGH.

This sequence belongs to the adenosylhomocysteinase family. The cofactor is NAD(+).

It is found in the cytoplasm. The enzyme catalyses S-adenosyl-L-homocysteine + H2O = L-homocysteine + adenosine. It participates in amino-acid biosynthesis; L-homocysteine biosynthesis; L-homocysteine from S-adenosyl-L-homocysteine: step 1/1. Its function is as follows. May play a key role in the regulation of the intracellular concentration of adenosylhomocysteine. The polypeptide is Adenosylhomocysteinase (Mycobacterium ulcerans (strain Agy99)).